Here is a 194-residue protein sequence, read N- to C-terminus: Glycerol-3-phosphate acyltransferase 2 (194 aa).

The next 5 helical transmembrane spans lie at 1–21 (MWLL…AYVV), 64–84 (VLAV…LAAL), 112–132 (LAMA…VVIF), 135–155 (YISL…IYFH), and 156–173 (RPWP…LVIY).

Belongs to the PlsY family. In terms of assembly, probably interacts with PlsX.

Its subcellular location is the cell membrane. It carries out the reaction an acyl phosphate + sn-glycerol 3-phosphate = a 1-acyl-sn-glycero-3-phosphate + phosphate. It participates in lipid metabolism; phospholipid metabolism. Catalyzes the transfer of an acyl group from acyl-phosphate (acyl-PO(4)) to glycerol-3-phosphate (G3P) to form lysophosphatidic acid (LPA). This enzyme utilizes acyl-phosphate as fatty acyl donor, but not acyl-CoA or acyl-ACP. The polypeptide is Glycerol-3-phosphate acyltransferase 2 (Moorella thermoacetica (strain ATCC 39073 / JCM 9320)).